Here is a 478-residue protein sequence, read N- to C-terminus: Subtilisin-like protease 3 (478 aa).

The signal sequence occupies residues 1–17; it reads MKFSTILPILWANCCLC. The Inhibitor I9 domain occupies 70-167; the sequence is RYVIVFNEDI…FVEQETTVKI (98 aa). The 302-residue stretch at 177–478 folds into the Peptidase S8 domain; the sequence is PWGLHRVSHR…GGGKKLDGFW (302 aa). Active-site charge relay system residues include aspartate 213, histidine 245, and serine 407.

This sequence belongs to the peptidase S8 family.

Its function is as follows. Serine protease with unknown substrate. The polypeptide is Subtilisin-like protease 3 (YSP3) (Saccharomyces cerevisiae (strain ATCC 204508 / S288c) (Baker's yeast)).